Reading from the N-terminus, the 704-residue chain is MAQDVLTDLNKVRNIGIMAHIDAGKTTTTERILYYTGITHKIGEVHDGAATMDWMAQEQERGITITSAATTCFWNKNQINIIDTPGHVDFTVEVERSLRVLDGAVAVFDGKEGVEPQSETVWRQADKYDVPRICFVNKMDKLGADFYFTVDTIINRLGAKPLVIQLPIGSEGGFEGVIDLVEMRALTWRGDSKGDVELGAKYDIEEIPADLQDKADEYRAKLLETVAETDDSLLEKYFGGEELTVAEIKAAIRKLTVNSEIYPVLCGSAFKNRGVQPMLDAVIDYLPSPLDVPPMEGHDVRDEEKIIIRKPDSTEPFSALAFKVAVHPFFGRLTYVRVYSGTIASGSQVINSTKGKKERIGKIFQMHSNKENPVDSVTAGHIYAVIGLKDTTTGDTLCDPQDQIVLESMTFPEPVIEVAIEPKTKADQEKLGVAIQKLAEEDPTFRTEQNQETGQTVIKGMGELHLDILVDRMKREFNVEANVGKPQVAYRETIRGTVDKHDFTHKKQTGGSGQFAKIQIKIEPMEVTAEKTYEFDNKVTGGRVPREYIPSVDAGIQDALQVGILAGYPMVGVKATLLDGAAHDVDSSEMAFKIAGSMAFKEAARKAKPVLLEPLMAVEVRTPEEYMGDVIGDLNSRRGQIQAMEDASGVKVITANVPLSEMFGYVGDLRSKTSGRAVYSMSFGSYAEVPKAVADEIVQKNKGE.

The tr-type G domain occupies 10–290; that stretch reads NKVRNIGIMA…AVIDYLPSPL (281 aa). Residues 19 to 26, 83 to 87, and 137 to 140 each bind GTP; these read AHIDAGKT, DTPGH, and NKMD.

The protein belongs to the TRAFAC class translation factor GTPase superfamily. Classic translation factor GTPase family. EF-G/EF-2 subfamily.

It is found in the cytoplasm. Catalyzes the GTP-dependent ribosomal translocation step during translation elongation. During this step, the ribosome changes from the pre-translocational (PRE) to the post-translocational (POST) state as the newly formed A-site-bound peptidyl-tRNA and P-site-bound deacylated tRNA move to the P and E sites, respectively. Catalyzes the coordinated movement of the two tRNA molecules, the mRNA and conformational changes in the ribosome. The protein is Elongation factor G of Clavibacter michiganensis subsp. michiganensis (strain NCPPB 382).